Here is a 151-residue protein sequence, read N- to C-terminus: UPF0735 ACT domain-containing protein SERP1207 (151 aa).

One can recognise an ACT domain in the interval 74-149 (TLILYVNDIV…HVTKVDLISM (76 aa)).

It belongs to the UPF0735 family.

This chain is UPF0735 ACT domain-containing protein SERP1207, found in Staphylococcus epidermidis (strain ATCC 35984 / DSM 28319 / BCRC 17069 / CCUG 31568 / BM 3577 / RP62A).